The sequence spans 463 residues: Quinolone resistance protein NorB (463 aa).

Helical transmembrane passes span 19-39 (IVLS…VVLI), 53-73 (IAVS…GGLA), 86-106 (IILN…LLLI), 107-127 (IGRL…LSII), 142-162 (YWSI…GAVA), 165-185 (LGWR…LFLI), 201-221 (FDIK…ILIT), 230-250 (SLLF…FIVL), 273-293 (TASN…NTFV), 299-319 (YSLL…LIMI), 334-354 (PMLI…LTFL), 357-377 (ILYV…LGIY), 403-423 (MASA…YAIV), and 435-455 (IALW…LLLV).

It belongs to the major facilitator superfamily. TCR/Tet family.

It is found in the cell membrane. In terms of biological role, multidrug efflux pump that acts independently of NorA and is one of the factors that confers resistance against diverse quinolones and chemical compounds. In Staphylococcus aureus (strain bovine RF122 / ET3-1), this protein is Quinolone resistance protein NorB (norB).